The chain runs to 554 residues: uncharacterized protein (554 aa).

The disordered stretch occupies residues 1 to 25 (MSSSIPPRLYDMSPTESKKQEDVSE). S13 is modified (phosphoserine). Helical transmembrane passes span 82–102 (FFVA…TSLI), 120–140 (APYL…VWSL), 149–169 (WAFN…GASP), 171–191 (FASI…NLPV), 210–230 (VMSF…WGLI), and 253–273 (FLFT…LVSV). S334 is subject to Phosphoserine. 6 consecutive transmembrane segments (helical) span residues 364–384 (LAIS…AFPL), 412–432 (SLIV…LVEF), 437–457 (KGTL…STTA), 462–482 (AYLG…GVLY), 497–517 (AVGL…VIAM), and 525–545 (APIF…VFFP).

This sequence belongs to the major facilitator superfamily.

The protein localises to the endoplasmic reticulum. It localises to the membrane. This is an uncharacterized protein from Schizosaccharomyces pombe (strain 972 / ATCC 24843) (Fission yeast).